Reading from the N-terminus, the 190-residue chain is CD70 antigen (190 aa).

Over 1-17 (MEEEGSGCNVPRLPWAS) the chain is Cytoplasmic. The helical transmembrane segment at 18-38 (ILRAALLLLLIGMVIYCFLCG) threads the bilayer. Residues 39-190 (QRFTQQQLDS…TFFGVQLVRP (152 aa)) lie on the Extracellular side of the membrane. One can recognise a THD domain in the interval 52 to 188 (DLAELLLNHT…DETFFGVQLV (137 aa)). Residues N59 and N110 are each glycosylated (N-linked (GlcNAc...) asparagine). 2 disulfides stabilise this stretch: C111-C148 and C130-C165. N-linked (GlcNAc...) asparagine glycosylation is present at N167.

Belongs to the tumor necrosis factor family. In terms of assembly, homotrimer. Post-translationally, N-glycosylated.

It is found in the cell membrane. Functionally, expressed at the plasma membrane of B cells, it is the ligand of the CD27 receptor which is specifically expressed at the surface of T cells. The CD70-CD27 signaling pathway mediates antigen-specific T cell activation and expansion which in turn provides immune surveillance of B cells. This Sus scrofa (Pig) protein is CD70 antigen.